A 478-amino-acid chain; its full sequence is Putative UDP-glucose flavonoid 3-O-glucosyltransferase 3 (478 aa).

Belongs to the UDP-glycosyltransferase family.

The chain is Putative UDP-glucose flavonoid 3-O-glucosyltransferase 3 from Fragaria ananassa (Strawberry).